Reading from the N-terminus, the 371-residue chain is 3-isopropylmalate dehydrogenase (371 aa).

77–90 (GPKWDDNPPHLRPE) provides a ligand contact to NAD(+). Positions 97, 107, 135, and 224 each coordinate substrate. Residues D224, D248, and D252 each coordinate Mg(2+). Residue 282 to 294 (GSAPDIAGMNKAN) coordinates NAD(+).

The protein belongs to the isocitrate and isopropylmalate dehydrogenases family. LeuB type 1 subfamily. In terms of assembly, homodimer. Requires Mg(2+) as cofactor. It depends on Mn(2+) as a cofactor.

It is found in the cytoplasm. It carries out the reaction (2R,3S)-3-isopropylmalate + NAD(+) = 4-methyl-2-oxopentanoate + CO2 + NADH. Its pathway is amino-acid biosynthesis; L-leucine biosynthesis; L-leucine from 3-methyl-2-oxobutanoate: step 3/4. Functionally, catalyzes the oxidation of 3-carboxy-2-hydroxy-4-methylpentanoate (3-isopropylmalate) to 3-carboxy-4-methyl-2-oxopentanoate. The product decarboxylates to 4-methyl-2 oxopentanoate. This is 3-isopropylmalate dehydrogenase from Geobacillus kaustophilus (strain HTA426).